Reading from the N-terminus, the 394-residue chain is MNKKSIRDVELAGKRVFCRVDFNVPMQDGVITDDTRIRAAVPTIRFMMEAGAKVILASHFGRPKGQVVEEMRLTPVAAHLSSLLGKDVRKLEDCQGADVEAAVERMESGDVILLENVRFHAGEEKNDPELAKSFAALADLFVNDAFGTAHRAHASTAGIAEYIPAVAGLLMEKEIRFMGGALSNPERPFTAIVGGAKVKDKIAVIENLLTKVDHLIIGGGMANTFLKAQGYGIGASLCEDDKLDLARTLMEQAKERGVQLLMPVDVVVADRFAADAEKQVVAIDAIPEGWMALDIGPKTVEQYHSVIVDSKTVVWNGPMGVFEMDAFAGGTIGVAKAMAACSGTTIIGGGDSVAAVEKAGVAEQMTHISTGGGASLEFMEGKELPGVAVLADNQ.

Substrate contacts are provided by residues 21–23 (DFN), arginine 36, 59–62 (HFGR), arginine 118, and arginine 151. ATP contacts are provided by residues lysine 201, glutamate 323, and 349 to 352 (GGDS).

This sequence belongs to the phosphoglycerate kinase family. In terms of assembly, monomer.

It localises to the cytoplasm. The catalysed reaction is (2R)-3-phosphoglycerate + ATP = (2R)-3-phospho-glyceroyl phosphate + ADP. The protein operates within carbohydrate degradation; glycolysis; pyruvate from D-glyceraldehyde 3-phosphate: step 2/5. This is Phosphoglycerate kinase from Brevibacillus brevis (strain 47 / JCM 6285 / NBRC 100599).